A 144-amino-acid chain; its full sequence is UPF0102 protein BURPS668_3819 (144 aa).

The tract at residues 1 to 28 (MCHAREASLGTGEPEAAPRDNFPREAGS) is disordered. The segment covering 16–28 (AAPRDNFPREAGS) has biased composition (basic and acidic residues).

This sequence belongs to the UPF0102 family.

The protein is UPF0102 protein BURPS668_3819 of Burkholderia pseudomallei (strain 668).